The chain runs to 310 residues: Probable manganese-dependent inorganic pyrophosphatase (310 aa).

Residues His-9, Asp-13, Asp-15, Asp-76, His-98, and Asp-150 each contribute to the Mn(2+) site.

It belongs to the PPase class C family. It depends on Mn(2+) as a cofactor.

Its subcellular location is the cytoplasm. It catalyses the reaction diphosphate + H2O = 2 phosphate + H(+). In Streptococcus thermophilus (strain CNRZ 1066), this protein is Probable manganese-dependent inorganic pyrophosphatase.